We begin with the raw amino-acid sequence, 868 residues long: DNA mismatch repair protein MutS (868 aa).

Residue 621–628 (GPNMGGKS) participates in ATP binding. The disordered stretch occupies residues 803-852 (LESGDGGDTGSAQLPLFGPEPVFPPPAQPEPEPDPIREAVENLDPDGLTP). Over residues 823-832 (PVFPPPAQPE) the composition is skewed to pro residues.

Belongs to the DNA mismatch repair MutS family.

In terms of biological role, this protein is involved in the repair of mismatches in DNA. It is possible that it carries out the mismatch recognition step. This protein has a weak ATPase activity. This is DNA mismatch repair protein MutS from Halorhodospira halophila (strain DSM 244 / SL1) (Ectothiorhodospira halophila (strain DSM 244 / SL1)).